The following is a 790-amino-acid chain: IQ motif and ubiquitin-like domain-containing protein (790 aa).

Residues 1 to 17 are compositionally biased toward polar residues; sequence MSNQPKKYETQNIANST. Residues 1–49 form a disordered region; it reads MSNQPKKYETQNIANSTEESDAFDIVTIPVPSEEPQESDQTEEHESGIE. A Ubiquitin-like domain is found at 130–206; the sequence is ATVKVVLIPV…IQVEIFSTNP (77 aa). The 30-residue stretch at 337 to 366 folds into the IQ domain; that stretch reads RLKAVIVIQTYYRQWHAKIFVEDLRRQKSL.

Component of the axonemal radial spoke 1 (RS1) complex, at least composed of spoke head proteins RSPH1, RSPH3, RSPH9 and the cilia-specific component RSPH4A or sperm-specific component RSPH6A, spoke stalk proteins RSPH14, DNAJB13, DYDC1, ROPN1L and NME5, and the anchor protein IQUB. Does not appear to be part of radial spoke complexes 2 or 3 (RS2 or RS3). Interacts with CALM1. Interacts with DNAJB13. Interacts with DYNLL2. Interacts with NME5. Interacts with RSPH3. Interacts with RSPH9. Interacts with ZMYND10. Interacts with calmodulin; the interaction occurs in conditions of low but not high calcium.

Its subcellular location is the cytoplasm. It is found in the cytoskeleton. The protein localises to the flagellum axoneme. The protein resides in the cell projection. It localises to the cilium. Its function is as follows. Adapter protein that anchors the radial spoke 1 (RS1) complex to the A microtubule of outer doublet microtubules in axonemes. The triple radial spokes (RS1, RS2 and RS3) are required to modulate beating of the sperm flagellum. May play a role in inhibiting signaling via MAPK1/ERK2 and MAPK3/ERK1. Additionally, may play a role in the functioning of cilia. Not required for the functioning of tracheal or ependymal cilia. This chain is IQ motif and ubiquitin-like domain-containing protein (IQUB), found in Macaca fascicularis (Crab-eating macaque).